Consider the following 381-residue polypeptide: Chorismate synthase (381 aa).

NADP(+) is bound by residues Arg-41 and Arg-47. Residues 127 to 129 (RAS), 247 to 248 (QA), Gly-291, 306 to 310 (KPIPT), and Arg-332 contribute to the FMN site.

Belongs to the chorismate synthase family. In terms of assembly, homotetramer. Requires FMNH2 as cofactor.

It carries out the reaction 5-O-(1-carboxyvinyl)-3-phosphoshikimate = chorismate + phosphate. It participates in metabolic intermediate biosynthesis; chorismate biosynthesis; chorismate from D-erythrose 4-phosphate and phosphoenolpyruvate: step 7/7. Its function is as follows. Catalyzes the anti-1,4-elimination of the C-3 phosphate and the C-6 proR hydrogen from 5-enolpyruvylshikimate-3-phosphate (EPSP) to yield chorismate, which is the branch point compound that serves as the starting substrate for the three terminal pathways of aromatic amino acid biosynthesis. This reaction introduces a second double bond into the aromatic ring system. This chain is Chorismate synthase, found in Anaeromyxobacter sp. (strain K).